We begin with the raw amino-acid sequence, 236 residues long: MRKLRADVSKVKVLSEIPSGAKLLWESNELALYYTYNATQGEVDWILVNRTSDKKYVSLLRGAELIYNNNVVTVPSYVFGNAFADVYFANGLSNYINDLNNIPLYSLAVLRDSSGKNIVGFVFSLPPNSMIEVPEYGFVNLQKIWGQLLEVYPGNLNLYVIIYDYNEIIEYEQESGVNVQSPPDPYAVFSYQFSISELGAIMTPRVIIEIPQSDVNFANTLIADFKKFVSSIKHML.

This is an uncharacterized protein from Saccharolobus islandicus (Sulfolobus islandicus).